The chain runs to 250 residues: 1-(5-phosphoribosyl)-5-[(5-phosphoribosylamino)methylideneamino] imidazole-4-carboxamide isomerase (250 aa).

The active-site Proton acceptor is D7. Catalysis depends on D129, which acts as the Proton donor.

This sequence belongs to the HisA/HisF family.

The protein resides in the cytoplasm. It carries out the reaction 1-(5-phospho-beta-D-ribosyl)-5-[(5-phospho-beta-D-ribosylamino)methylideneamino]imidazole-4-carboxamide = 5-[(5-phospho-1-deoxy-D-ribulos-1-ylimino)methylamino]-1-(5-phospho-beta-D-ribosyl)imidazole-4-carboxamide. It participates in amino-acid biosynthesis; L-histidine biosynthesis; L-histidine from 5-phospho-alpha-D-ribose 1-diphosphate: step 4/9. The sequence is that of 1-(5-phosphoribosyl)-5-[(5-phosphoribosylamino)methylideneamino] imidazole-4-carboxamide isomerase from Shewanella denitrificans (strain OS217 / ATCC BAA-1090 / DSM 15013).